A 234-amino-acid chain; its full sequence is DNA repair protein RecO (234 aa).

This sequence belongs to the RecO family.

Functionally, involved in DNA repair and RecF pathway recombination. The sequence is that of DNA repair protein RecO from Halorhodospira halophila (strain DSM 244 / SL1) (Ectothiorhodospira halophila (strain DSM 244 / SL1)).